The primary structure comprises 477 residues: Aspartyl/glutamyl-tRNA(Asn/Gln) amidotransferase subunit B (477 aa).

Belongs to the GatB/GatE family. GatB subfamily. As to quaternary structure, heterotrimer of A, B and C subunits.

It catalyses the reaction L-glutamyl-tRNA(Gln) + L-glutamine + ATP + H2O = L-glutaminyl-tRNA(Gln) + L-glutamate + ADP + phosphate + H(+). It carries out the reaction L-aspartyl-tRNA(Asn) + L-glutamine + ATP + H2O = L-asparaginyl-tRNA(Asn) + L-glutamate + ADP + phosphate + 2 H(+). Functionally, allows the formation of correctly charged Asn-tRNA(Asn) or Gln-tRNA(Gln) through the transamidation of misacylated Asp-tRNA(Asn) or Glu-tRNA(Gln) in organisms which lack either or both of asparaginyl-tRNA or glutaminyl-tRNA synthetases. The reaction takes place in the presence of glutamine and ATP through an activated phospho-Asp-tRNA(Asn) or phospho-Glu-tRNA(Gln). This Sulfurovum sp. (strain NBC37-1) protein is Aspartyl/glutamyl-tRNA(Asn/Gln) amidotransferase subunit B.